The following is an 871-amino-acid chain: Nonsense-mediated mRNA decay factor SMG8 (871 aa).

A disordered region spans residues 541-596; the sequence is LDDMELPESLQQSYTSSEDSSEDDDDFAIQTASSEDSLSGSDSYARPGSRRDEFES. The span at 573 to 583 shows a compositional bias: low complexity; it reads SSEDSLSGSDS.

It belongs to the SMG8 family.

Involved in nonsense-mediated decay (NMD) of mRNAs containing premature stop codons. Probable component of kinase complex containing smg-1 and recruited to stalled ribosomes. The polypeptide is Nonsense-mediated mRNA decay factor SMG8 (smg-8) (Caenorhabditis briggsae).